The following is a 253-amino-acid chain: MSYLTKIIGTKIEEVSGMQPIDVPVTKPISLLHVMSEGFHIISEIKRSSPSKGMIRETVDVAKRARQYEKAGATMISVLTDTTYFNGSFDDLRQVADVVTIPVLCKDFIIDERQLDYAKHYGASVALLIVAALHPTRLHELTRYARSIGLDVLVEVHDEAELRIALELDDVLIGINNRDLKTFEVSLETSIDLMKRYPEVTFVSESGVSTVEAAARLQEAGASAILVGEALMREEDPIRLLEELKTCSLKSVD.

The protein belongs to the TrpC family.

The enzyme catalyses 1-(2-carboxyphenylamino)-1-deoxy-D-ribulose 5-phosphate + H(+) = (1S,2R)-1-C-(indol-3-yl)glycerol 3-phosphate + CO2 + H2O. It participates in amino-acid biosynthesis; L-tryptophan biosynthesis; L-tryptophan from chorismate: step 4/5. This Exiguobacterium sp. (strain ATCC BAA-1283 / AT1b) protein is Indole-3-glycerol phosphate synthase.